We begin with the raw amino-acid sequence, 343 residues long: Anthranilate phosphoribosyltransferase (343 aa).

5-phospho-alpha-D-ribose 1-diphosphate is bound by residues Gly81, 84-85 (GD), 91-94 (NLST), 109-117 (KHGNRSVSS), and Ser121. Anthranilate is bound at residue Gly81. Ser93 is a binding site for Mg(2+). Asn112 provides a ligand contact to anthranilate. Arg167 is an anthranilate binding site. Mg(2+) contacts are provided by Asp226 and Glu227.

It belongs to the anthranilate phosphoribosyltransferase family. Homodimer. It depends on Mg(2+) as a cofactor.

It catalyses the reaction N-(5-phospho-beta-D-ribosyl)anthranilate + diphosphate = 5-phospho-alpha-D-ribose 1-diphosphate + anthranilate. Its pathway is amino-acid biosynthesis; L-tryptophan biosynthesis; L-tryptophan from chorismate: step 2/5. In terms of biological role, catalyzes the transfer of the phosphoribosyl group of 5-phosphorylribose-1-pyrophosphate (PRPP) to anthranilate to yield N-(5'-phosphoribosyl)-anthranilate (PRA). The chain is Anthranilate phosphoribosyltransferase from Cellvibrio japonicus (strain Ueda107) (Pseudomonas fluorescens subsp. cellulosa).